The sequence spans 328 residues: Beta-ketoacyl-[acyl-carrier-protein] synthase III (328 aa).

Active-site residues include cysteine 113 and histidine 253. The ACP-binding stretch occupies residues 254 to 258 (QANLR). Residue asparagine 283 is part of the active site.

It belongs to the thiolase-like superfamily. FabH family. Homodimer.

The protein resides in the cytoplasm. The enzyme catalyses malonyl-[ACP] + acetyl-CoA + H(+) = 3-oxobutanoyl-[ACP] + CO2 + CoA. It functions in the pathway lipid metabolism; fatty acid biosynthesis. Its function is as follows. Catalyzes the condensation reaction of fatty acid synthesis by the addition to an acyl acceptor of two carbons from malonyl-ACP. Catalyzes the first condensation reaction which initiates fatty acid synthesis and may therefore play a role in governing the total rate of fatty acid production. Possesses both acetoacetyl-ACP synthase and acetyl transacylase activities. Its substrate specificity determines the biosynthesis of branched-chain and/or straight-chain of fatty acids. This is Beta-ketoacyl-[acyl-carrier-protein] synthase III from Fusobacterium nucleatum subsp. nucleatum (strain ATCC 25586 / DSM 15643 / BCRC 10681 / CIP 101130 / JCM 8532 / KCTC 2640 / LMG 13131 / VPI 4355).